We begin with the raw amino-acid sequence, 172 residues long: Adenine phosphoribosyltransferase (172 aa).

It belongs to the purine/pyrimidine phosphoribosyltransferase family. As to quaternary structure, homodimer.

It localises to the cytoplasm. It catalyses the reaction AMP + diphosphate = 5-phospho-alpha-D-ribose 1-diphosphate + adenine. It functions in the pathway purine metabolism; AMP biosynthesis via salvage pathway; AMP from adenine: step 1/1. Functionally, catalyzes a salvage reaction resulting in the formation of AMP, that is energically less costly than de novo synthesis. The chain is Adenine phosphoribosyltransferase from Clostridium perfringens (strain ATCC 13124 / DSM 756 / JCM 1290 / NCIMB 6125 / NCTC 8237 / Type A).